Consider the following 195-residue polypeptide: Molybdenum cofactor guanylyltransferase (195 aa).

Residues 12 to 14 (LAG), K25, N53, D70, and D100 each bind GTP. D100 is a Mg(2+) binding site.

Belongs to the MobA family. Monomer. The cofactor is Mg(2+).

Its subcellular location is the cytoplasm. It carries out the reaction Mo-molybdopterin + GTP + H(+) = Mo-molybdopterin guanine dinucleotide + diphosphate. Its function is as follows. Transfers a GMP moiety from GTP to Mo-molybdopterin (Mo-MPT) cofactor (Moco or molybdenum cofactor) to form Mo-molybdopterin guanine dinucleotide (Mo-MGD) cofactor. The polypeptide is Molybdenum cofactor guanylyltransferase (Vibrio vulnificus (strain YJ016)).